Consider the following 2155-residue polypeptide: Polyketide synthase 2 (2155 aa).

The tract at residues 7-244 (FIFGDQTGGF…IPIPIWAPYH (238 aa)) is N-terminal acylcarrier protein transacylase domain (SAT). The Ketosynthase family 3 (KS3) domain maps to 374-807 (DSKIAIIGMS…GGNSALLLED (434 aa)). Active-site for beta-ketoacyl synthase activity residues include cysteine 546, histidine 681, and histidine 723. The segment at 908–1213 (GFVFSGQGAQ…ASLHRKDDGW (306 aa)) is malonyl-CoA:ACP transacylase (MAT) domain. The For acyl/malonyl transferase activity role is filled by serine 998. The tract at residues 1290–1605 (TSSVQRIIRQ…RSLLNKVLPP (316 aa)) is product template (PT) domain. The tract at residues 1294-1428 (QRIIRQTDGP…CLLRFADPTS (135 aa)) is N-terminal hotdog fold. Positions 1294-1600 (QRIIRQTDGP…FLGMSRSLLN (307 aa)) constitute a PKS/mFAS DH domain. Histidine 1327 (proton acceptor; for dehydratase activity) is an active-site residue. Residues 1455–1600 (TDSLLSKGIV…FLGMSRSLLN (146 aa)) are C-terminal hotdog fold. Aspartate 1514 (proton donor; for dehydratase activity) is an active-site residue. The tract at residues 1626–1654 (AASAKDTERRPLDIPTRAQRQPSSPQTGT) is disordered. A compositionally biased stretch (polar residues) spans 1643–1654 (AQRQPSSPQTGT). The Carrier 1 domain occupies 1649–1726 (SPQTGTMGRI…ELKAFLGADQ (78 aa)). The residue at position 1686 (serine 1686) is an O-(pantetheine 4'-phosphoryl)serine. Positions 1735 to 1765 (SSIGQHTPQTSDKGSGTLASQKTDGDTGPDT) are disordered. A compositionally biased stretch (polar residues) spans 1736 to 1756 (SIGQHTPQTSDKGSGTLASQK). Residues 1764–1838 (DTTLNRVCAI…ALQKALCGSE (75 aa)) enclose the Carrier 2 domain. O-(pantetheine 4'-phosphoryl)serine is present on serine 1798. The thioesterase (TE) domain stretch occupies residues 1873-2149 (ASPPHATSIL…MVEMGNLIGD (277 aa)). Serine 1979 (for thioesterase activity) is an active-site residue.

Polyketide synthase; part of the Pks2 gene cluster that mediates the formation of infectious structures (appressoria), enabling these fungi to kill insects faster. The product of the Pks2 gene cluster is different from the one of Pks1 and has still not been identified. The chain is Polyketide synthase 2 from Metarhizium anisopliae (strain ARSEF 549).